Reading from the N-terminus, the 1976-residue chain is Myosin-10 (1976 aa).

At R18 the chain carries Omega-N-methylarginine. The Myosin N-terminal SH3-like domain maps to 31-81 (TAKKLVWIPSERHGFEAASIKEERGDEVMVELAENGKKAMVNKDDIQKMNP). A Myosin motor domain is found at 85–783 (SKVEDMAELT…VLAHLEEERD (699 aa)). Position 178 to 185 (178 to 185 (GESGAGKT)) interacts with ATP. K442 is modified (N6-acetyllysine). The segment at 661–683 (LTKLMATLRNTNPNFVRCIIPNH) is actin-binding. Residues 786–815 (ITDIIIFFQAVCRGYLARKAFAKKQQQLSA) form the IQ domain. Residues 845-1976 (LQVTRQEEEL…VNETQPPQSE (1132 aa)) are a coiled coil. Residues 1125–1175 (EDFESEKASRNKAEKQKRDLSEELEALKTELEDTLDTTAAQQELRTKREQE) form a disordered region. Basic and acidic residues predominate over residues 1129 to 1155 (SEKASRNKAEKQKRDLSEELEALKTEL). Phosphoserine is present on S1145. N6-acetyllysine occurs at positions 1241, 1301, and 1645. Disordered stretches follow at residues 1697–1718 (ASSERARRHAEQERDELADEIA) and 1874–1976 (KANA…PQSE). Residues 1698-1708 (SSERARRHAEQ) show a composition bias toward basic and acidic residues. Position 1930 is an omega-N-methylarginine (R1930). Phosphoserine occurs at positions 1935, 1937, 1938, and 1939. R1940 carries the post-translational modification Omega-N-methylarginine. S1952 and S1956 each carry phosphoserine. Phosphothreonine is present on T1960. Over residues 1967-1976 (VNETQPPQSE) the composition is skewed to polar residues. S1975 is modified (phosphoserine).

This sequence belongs to the TRAFAC class myosin-kinesin ATPase superfamily. Myosin family. In terms of assembly, myosin is a hexameric protein that consists of 2 heavy chain subunits (MHC), 2 alkali light chain subunits (MLC) and 2 regulatory light chain subunits (MLC-2). Interacts with PLEKHG6. Interacts with ECPAS. Interacts with KIF26B. Interacts with LARP6. Interacts with MCC. Interacts with CFAP95. Post-translationally, phosphorylated by ABL2.

It localises to the cell projection. The protein resides in the lamellipodium. In terms of biological role, involved with LARP6 in the stabilization of type I collagen mRNAs for CO1A1 and CO1A2. During cell spreading, plays an important role in cytoskeleton reorganization, focal contacts formation (in the central part but not the margins of spreading cells), and lamellipodial extension; this function is mechanically antagonized by MYH9. Cellular myosin that appears to play a role in cytokinesis, cell shape, and specialized functions such as secretion and capping. This is Myosin-10 (Myh10) from Rattus norvegicus (Rat).